A 1011-amino-acid polypeptide reads, in one-letter code: MASRRPTHRHHTEAPDPGGRGRGRGRAARYAQPQPQPQQQQQQQGRGCRARGASPPPPPQQQQQQQPRSTPTRATTVTVASSSSTTATASSSPLAPELRQAIMEAPRPSELAQPSPTPPQEQPVDAATTTPHHIPSSSKSIRFPLRPGKGTIGTRCMVKANHFFAHLPNKDLHHYDVSITPEVTSRIVNRAVIKELVNLYKASYLGGRLPAYDGRKSLYTAGPLPFTSQEFQITLLDDDDGSGSERRQRTFRVVIKFAARADLHRLELFLAGRHAEAPQEALQVLDIVLRELPSARYAPFGRSFFSPYLGRRQPLGEGLESWRGFYQSIRPTQMGLSLNIDMSATAFIEPLPVIDFVAQLLNSDIHSRPLSDAERVKIKKALRGVKVEVTHRGNMRRKYRISGLTIQPTRELTFPVDEGGTVKSVVQYFQETYGFAIQHTYLPCLTVQRLNYLPMEVCKIVEGQRYSKRLNQNQIRALLEETCQHPRDRERDIIKMVKHNAYQDDPYAKEFGIKISDRLASVEARILPAPRLKYNETGREKDCLPRVGQWNMMNKKMVNGGKVRSWMCVNFARNVQESVVRGFCHELALMCQASGMDFAPEPILPPLNAHPDQVERALKARYHDAMNVLGPQRRELDLLIGILPDNNGSLYGDLKRVCEIDLGIVSQCCCTKQVFKMNKQILANLALKINVKVGGRNTVLVDAVSRRIPLVTDRPTIIFGADVTHPHPGEDSSPSIAAVVASQDWPEVTKYAGLVSAQAHRQELIEDLYKIWQDPQRGTVSGGMIRELLISFKRSTGEKPQRIIFYRDGVSEGQFYQVLLYELNAIRKACASLETNYQPKVTFIVVQKRHHTRLFAHNHNDQNSVDRSGNILPGTVVDSKICHPTEFDFYLCSHAGIKGTSRPAHYHVLWDENNFTADALQILTNNLCYTYARCTRSVSIVPPAYYAHLAAFRARFYMEPDTSDSSSVVSGPGVRGPLSGSSTSRTRAPGGAAVKPLPALKDSVKRVMFYC.

A compositionally biased stretch (basic residues) spans 1–11 (MASRRPTHRHH). Disordered stretches follow at residues 1-95 (MASR…SPLA) and 107-147 (RPSE…PLRP). Low complexity-rich tracts occupy residues 28–53 (ARYA…ARGA) and 61–92 (QQQQ…ASSS). Residues 127–140 (ATTTPHHIPSSSKS) show a composition bias toward polar residues. Residues 352 to 462 (PVIDFVAQLL…LPMEVCKIVE (111 aa)) enclose the PAZ domain. In terms of domain architecture, Piwi spans 638-959 (LLIGILPDNN…AAFRARFYME (322 aa)). Over residues 963–982 (SDSSSVVSGPGVRGPLSGSS) the composition is skewed to low complexity. The interval 963-994 (SDSSSVVSGPGVRGPLSGSSTSRTRAPGGAAV) is disordered.

This sequence belongs to the argonaute family. Ago subfamily.

Functionally, probably involved in the RNA silencing pathway. May bind to short RNAs such as microRNAs (miRNAs) or short interfering RNAs (siRNAs), and represses the translation of mRNAs which are complementary to them. The chain is Protein argonaute 1C (AGO1C) from Oryza sativa subsp. japonica (Rice).